A 515-amino-acid polypeptide reads, in one-letter code: 2-isopropylmalate synthase (515 aa).

Residues 4–264 form the Pyruvate carboxyltransferase domain; sequence VKIFDTTLRD…NIGINQDTTQ (261 aa). Asp-13, His-201, His-203, and Asn-237 together coordinate Mn(2+). The regulatory domain stretch occupies residues 390–515; the sequence is ELDYLSVNTG…RQTTSAQEGI (126 aa).

This sequence belongs to the alpha-IPM synthase/homocitrate synthase family. LeuA type 1 subfamily. Homodimer. It depends on Mn(2+) as a cofactor.

The protein localises to the cytoplasm. The enzyme catalyses 3-methyl-2-oxobutanoate + acetyl-CoA + H2O = (2S)-2-isopropylmalate + CoA + H(+). It participates in amino-acid biosynthesis; L-leucine biosynthesis; L-leucine from 3-methyl-2-oxobutanoate: step 1/4. Functionally, catalyzes the condensation of the acetyl group of acetyl-CoA with 3-methyl-2-oxobutanoate (2-ketoisovalerate) to form 3-carboxy-3-hydroxy-4-methylpentanoate (2-isopropylmalate). This chain is 2-isopropylmalate synthase, found in Halothermothrix orenii (strain H 168 / OCM 544 / DSM 9562).